Here is a 141-residue protein sequence, read N- to C-terminus: Zinc finger protein 593 homolog (141 aa).

The interval 1–32 is disordered; it reads MGRYSGHGGTHTKKKQYKRARSTKNRAKDIDQ. A compositionally biased stretch (basic residues) spans 10–25; the sequence is THTKKKQYKRARSTKN. The segment at 60–84 adopts a C2H2-type zinc-finger fold; sequence NYCIHCSKHFVTNEDLQSHIKGKPH.

The protein belongs to the ZNF593/BUD20 C2H2-type zinc-finger protein family. Associates with pre-60S ribosomal particles; released from the pre-60S particle very early in the cytoplasm.

It localises to the nucleus. It is found in the cytoplasm. Involved in pre-60S ribosomal particles maturation by promoting the nuclear export of the 60S ribosome. This Dictyostelium discoideum (Social amoeba) protein is Zinc finger protein 593 homolog.